A 267-amino-acid polypeptide reads, in one-letter code: Hydroxyethylthiazole kinase (267 aa).

Position 48 (M48) interacts with substrate. Residues R124 and S170 each coordinate ATP. G197 is a binding site for substrate.

It belongs to the Thz kinase family. It depends on Mg(2+) as a cofactor.

It carries out the reaction 5-(2-hydroxyethyl)-4-methylthiazole + ATP = 4-methyl-5-(2-phosphooxyethyl)-thiazole + ADP + H(+). The protein operates within cofactor biosynthesis; thiamine diphosphate biosynthesis; 4-methyl-5-(2-phosphoethyl)-thiazole from 5-(2-hydroxyethyl)-4-methylthiazole: step 1/1. Functionally, catalyzes the phosphorylation of the hydroxyl group of 4-methyl-5-beta-hydroxyethylthiazole (THZ). The polypeptide is Hydroxyethylthiazole kinase (Aliivibrio fischeri (strain ATCC 700601 / ES114) (Vibrio fischeri)).